The sequence spans 246 residues: Homeobox protein Hox-B4a (246 aa).

Residues 23–125 (YSQSDYLPSH…SQNTSTVSSR (103 aa)) form a disordered region. Polar residues-rich tracts occupy residues 39 to 48 (AQRQDPSFQH) and 112 to 123 (QTPTSQNTSTVS). Positions 130-135 (VYPWMK) match the Antp-type hexapeptide motif. The segment at residues 151–210 (PKRSRTAYTRQQVLELEKEFHYNRYLTRRRRVEIAHTLCLSERQIKIWFQNRRMKWKKDH) is a DNA-binding region (homeobox). The segment at 210-246 (HKLPNTKIRSNSASTNSSGCPTLCSNQSRASGPPPSL) is disordered. Polar residues predominate over residues 216–239 (KIRSNSASTNSSGCPTLCSNQSRA).

It belongs to the Antp homeobox family. Deformed subfamily.

It is found in the nucleus. Functionally, sequence-specific transcription factor which is part of a developmental regulatory system that provides cells with specific positional identities on the anterior-posterior axis. The polypeptide is Homeobox protein Hox-B4a (hoxb4a) (Danio rerio (Zebrafish)).